We begin with the raw amino-acid sequence, 225 residues long: PKHD-type hydroxylase YbiX (225 aa).

Positions 78–177 constitute a Fe2OG dioxygenase domain; it reads TLSTPLFNRY…RVASFMWIQS (100 aa). Residues His-96, Asp-98, and His-158 each contribute to the Fe cation site. Residue Arg-168 coordinates 2-oxoglutarate.

Fe(2+) serves as cofactor. The cofactor is L-ascorbate.

The sequence is that of PKHD-type hydroxylase YbiX from Shigella flexneri serotype 5b (strain 8401).